We begin with the raw amino-acid sequence, 903 residues long: Protein translocase subunit SecA (903 aa).

ATP-binding positions include Gln-87, 105 to 109, and Asp-512; that span reads GEGKT. The Zn(2+) site is built by Cys-887, Cys-889, Cys-898, and His-899.

The protein belongs to the SecA family. Monomer and homodimer. Part of the essential Sec protein translocation apparatus which comprises SecA, SecYEG and auxiliary proteins SecDF-YajC and YidC. Zn(2+) serves as cofactor.

It localises to the cell inner membrane. Its subcellular location is the cytoplasm. It catalyses the reaction ATP + H2O + cellular proteinSide 1 = ADP + phosphate + cellular proteinSide 2.. Functionally, part of the Sec protein translocase complex. Interacts with the SecYEG preprotein conducting channel. Has a central role in coupling the hydrolysis of ATP to the transfer of proteins into and across the cell membrane, serving both as a receptor for the preprotein-SecB complex and as an ATP-driven molecular motor driving the stepwise translocation of polypeptide chains across the membrane. This Photorhabdus laumondii subsp. laumondii (strain DSM 15139 / CIP 105565 / TT01) (Photorhabdus luminescens subsp. laumondii) protein is Protein translocase subunit SecA.